Consider the following 495-residue polypeptide: Membrane-bound glycerophospholipid O-acyltransferase 1 (495 aa).

The next 6 helical transmembrane spans lie at 34 to 54 (VNFV…RIYL), 70 to 90 (IFGI…LFVL), 126 to 146 (IYIF…MIVT), 180 to 200 (PSFL…AGPC), 238 to 258 (TGAV…FLTL), and 297 to 317 (YFAW…FSGV). Active-site residues include N350 and H381. Helical transmembrane passes span 371–391 (VLTF…YFTF), 426–446 (TWAV…MLAV), and 450–470 (ISLY…IILF). S488 carries the post-translational modification Phosphoserine.

This sequence belongs to the membrane-bound acyltransferase family. As to expression, expressed in neutrophils.

It localises to the endoplasmic reticulum membrane. The enzyme catalyses a 1-acyl-sn-glycero-3-phospho-L-serine + an acyl-CoA = a 1,2-diacyl-sn-glycero-3-phospho-L-serine + CoA. The catalysed reaction is a 1-acyl-sn-glycero-3-phosphocholine + an acyl-CoA = a 1,2-diacyl-sn-glycero-3-phosphocholine + CoA. It catalyses the reaction a 1-acyl-sn-glycero-3-phosphoethanolamine + an acyl-CoA = a 1,2-diacyl-sn-glycero-3-phosphoethanolamine + CoA. It carries out the reaction 1-(9Z-octadecenoyl)-sn-glycero-3-phospho-L-serine + (9Z)-octadecenoyl-CoA = 1,2-di-(9Z)-octadecenoyl-sn-glycero-3-phospho-L-serine + CoA. The enzyme catalyses 1-(9Z-octadecenoyl)-sn-glycero-3-phospho-L-serine + octadecanoyl-CoA = 1-(9Z-octadecenoyl)-2-octadecanoyl-sn-glycero-3-phospho-L-serine + CoA. The catalysed reaction is 1-(9Z-octadecenoyl)-sn-glycero-3-phospho-L-serine + (9Z)-hexadecenoyl-CoA = 1-(9Z-octadecenoyl)-2-(9Z-hexadecenoyl)-sn-glycero-3-phospho-L-serine + CoA. It catalyses the reaction 1-(9Z-octadecenoyl)-sn-glycero-3-phospho-L-serine + (9Z,12Z)-octadecadienoyl-CoA = 1-(9Z-octadecenoyl)-2-(9Z,12Z-octadienoyl)-sn-glycero-3-phospho-L-serine + CoA. It carries out the reaction 1-hexadecanoyl-sn-glycero-3-phosphocholine + (9Z)-octadecenoyl-CoA = 1-hexadecanoyl-2-(9Z-octadecenoyl)-sn-glycero-3-phosphocholine + CoA. The enzyme catalyses a 1-O-(1Z-alkenyl)-sn-glycero-3-phosphoethanolamine + (9Z)-octadecenoyl-CoA = 1-O-(1Z)-alkenyl-2-(9Z)-octadecenoyl-sn-glycero-3-phosphoethanolamine + CoA. The catalysed reaction is 1-octadecanoyl-sn-glycero-3-phosphoethanolamine + (9Z)-octadecenoyl-CoA = 1-octadecanoyl-2-(9Z-octadecenoyl)-sn-glycero-3-phosphoethanolamine + CoA. It catalyses the reaction 1-(9Z-octadecenoyl)-sn-glycero-3-phosphoethanolamine + (9Z)-octadecenoyl-CoA = 1,2-di-(9Z-octadecenoyl)-sn-glycero-3-phosphoethanolamine + CoA. It carries out the reaction 1-hexadecanoyl-sn-glycero-3-phosphoethanolamine + (9Z)-octadecenoyl-CoA = 1-hexadecanoyl-2-(9Z-octadecenoyl)-sn-glycero-3-phosphoethanolamine + CoA. The enzyme catalyses 1-(10Z-heptadecenoyl)-sn-glycero-3-phosphoethanolamine + hexadecanoyl-CoA = 1-(10Z-heptadecenoyl)-2-hexadecanoyl-sn-glycero-3-phosphoethanolamine + CoA. The catalysed reaction is 1-(10Z-heptadecenoyl)-sn-glycero-3-phosphoethanolamine + (9Z)-octadecenoyl-CoA = 1-(10Z-heptadecenoyl)-2-(9Z-octadecenoyl)-sn-glycero-3-phosphoethanolamine + CoA. It participates in lipid metabolism; phospholipid metabolism. With respect to regulation, partially inhibited by thimerosal. In terms of biological role, acyltransferase which catalyzes the transfer of an acyl group from an acyl-CoA towards a lysophospholipid producing a phospholipid and participates in the reacylation step of the phospholipid remodeling pathway also known as the Lands cycle. Acts on lysophosphatidylserine (1-acyl-2-hydroxy-sn-glycero-3-phospho-L-serine or LPS) and lysophosphatidylethanolamine (1-acyl-sn-glycero-3-phosphoethanolamine or LPE), and to a lesser extend lysophosphatidylcholine. Prefers oleoyl-CoA as the acyl donor and 1-oleoyl-LPE as acceptor. May play a role in neurite outgrowth during neuronal differentiation. This chain is Membrane-bound glycerophospholipid O-acyltransferase 1, found in Homo sapiens (Human).